A 281-amino-acid chain; its full sequence is MSLKRCRALPVVAIVALVASGVITFIWSQQRRLIYFPSAGPVPSASSVLPAGRDVVVETQDGMRLGGWYFPHTSGGSGPAVLVCNGNAGDRSMRAELAVALHGLGLSVLLFDYRGYGGNPGRPSEQGLAADARAAQEWLSGQSDVDPARIAYFGESLGAAVAVGLAVQRPPAALVLRSPFTSLAEVGAVHYPWLPLRRLLLDHYPSIERIASVHAPVLVIAGGSDDIVPATLSERLVAAAAEPKRYVVVPGVGHNDPELLDGRVMLDAIRRFLTETAVLGQ.

The next 4 membrane-spanning stretches (helical) occupy residues 8 to 28 (ALPVVAIVALVASGVITFIWS), 97 to 117 (LAVALHGLGLSVLLFDYRGYG), 147 to 167 (PARIAYFGESLGAAVAVGLAV), and 210 to 230 (IASVHAPVLVIAGGSDDIVPA).

This sequence to S.pombe bem46 and yeast YNL320w.

It is found in the cell membrane. This is an uncharacterized protein from Mycobacterium tuberculosis (strain CDC 1551 / Oshkosh).